We begin with the raw amino-acid sequence, 511 residues long: Peroxisomal N(1)-acetyl-spermine/spermidine oxidase (511 aa).

Met1 bears the N-acetylmethionine mark. FAD contacts are provided by residues Ala24, Glu45, Arg53, and 69–70; that span reads HW. 2 residues coordinate substrate: His72 and Val194. Val247 is an FAD binding site. Asn320 is a binding site for substrate. FAD contacts are provided by residues Glu472 and 481–482; that span reads TT. Positions 509-511 match the Microbody targeting signal motif; sequence PRL.

The protein belongs to the flavin monoamine oxidase family. In terms of assembly, monomer. Requires FAD as cofactor. Widely expressed. Not detected in spleen. Expressed at lower level in neoplastic tissues.

The protein resides in the peroxisome. It is found in the cytoplasm. The enzyme catalyses N(1)-acetylspermine + O2 + H2O = 3-acetamidopropanal + spermidine + H2O2. The catalysed reaction is N(1)-acetylspermidine + O2 + H2O = 3-acetamidopropanal + putrescine + H2O2. It catalyses the reaction N(1),N(12)-diacetylspermine + O2 + H2O = 3-acetamidopropanal + N(1)-acetylspermidine + H2O2. It participates in amine and polyamine metabolism; spermine metabolism. Functionally, flavoenzyme which catalyzes the oxidation of N(1)-acetylspermine to spermidine and is thus involved in the polyamine back-conversion. Can also oxidize N(1)-acetylspermidine to putrescine. Substrate specificity: N(1)-acetylspermine = N(1)-acetylspermidine &gt; N(1),N(12)-diacylspermine &gt;&gt; spermine. Does not oxidize spermidine. Plays an important role in the regulation of polyamine intracellular concentration and has the potential to act as a determinant of cellular sensitivity to the antitumor polyamine analogs. This chain is Peroxisomal N(1)-acetyl-spermine/spermidine oxidase (PAOX), found in Homo sapiens (Human).